A 554-amino-acid polypeptide reads, in one-letter code: MRISASTVLLGAASAASAASFQNQAQQVLADNFHKAHDAIKPVADSFAHTTLESFEEAFNGMNSQAKALWDEIKLLVPESAFDKPTWFSKPKAAKRRKDWDHVVKGADVQKLWVKGADGEKHREVGGQLDNFNLRVKSVDPSKLGVDKVKQYSGYLDDEANDKHLFYWFFESRNDPKNDPVVLWLNGGPGCSSLTGLFLELGPSSIDKKLKVINNEYAWNNNASVIFLDQPVNVGYSYSGNAVSNTVAAGKDVYALLTLFFHQFPEYAKQDFHIAGESYAGHYIPVFASEILSHKDRNINLKSVLIGNGLTDPLTQYEHYRPMACGEGGYPAVLSESECRSMDNALPRCQSLIRNCYESGSVWSCVPAAIYCNNQFIGPYQRTGQNVYDIRGKCEDDNNLCYSALGWISDYLNQKDVMDALGVEVESYDSCNFDINRNFLFQGDWMQPFHRLVPGILKEIPVLIYAGDADFICNWLGNKAWSEALEWPGKKGFNKAELEDLSLPEADKEYGKVKSSGNFTFMQIYQAGHMVPMDQPENSLDFLNRWLGGEWFEQ.

The signal sequence occupies residues 1 to 17 (MRISASTVLLGAASAAS). The propeptide occupies 18-137 (AASFQNQAQQ…QLDNFNLRVK (120 aa)). Disulfide bonds link cysteine 191–cysteine 431, cysteine 325–cysteine 339, cysteine 349–cysteine 372, cysteine 356–cysteine 365, and cysteine 394–cysteine 401. An N-linked (GlcNAc...) asparagine glycan is attached at asparagine 222. Serine 278 is a catalytic residue. Residue aspartate 470 is part of the active site. Residue asparagine 518 is glycosylated (N-linked (GlcNAc...) asparagine). The active site involves histidine 529.

This sequence belongs to the peptidase S10 family.

It localises to the vacuole. The catalysed reaction is Release of a C-terminal amino acid with broad specificity.. Its function is as follows. Vacuolar carboxypeptidase involved in degradation of small peptides. Digests preferentially peptides containing an aliphatic or hydrophobic residue in P1' position, as well as methionine, leucine or phenylalanine in P1 position of ester substrate. This is Carboxypeptidase Y homolog A (CPYA) from Sordaria macrospora (strain ATCC MYA-333 / DSM 997 / K(L3346) / K-hell).